Consider the following 460-residue polypeptide: Bifunctional protein GlmU (460 aa).

The pyrophosphorylase stretch occupies residues 1-235; it reads MALSAAIVLA…PLTVEGVNDR (235 aa). UDP-N-acetyl-alpha-D-glucosamine contacts are provided by residues 9–12, Lys23, Gln76, and 81–82; these read LAAG and GT. Asp109 serves as a coordination point for Mg(2+). Gly146, Glu161, Asn176, and Asn233 together coordinate UDP-N-acetyl-alpha-D-glucosamine. Asn233 lines the Mg(2+) pocket. The linker stretch occupies residues 236 to 256; it reads VQLAALSKTYNRRVCERWMRD. The interval 257–460 is N-acetyltransferase; sequence GVTILDPETT…VEGWKPAWER (204 aa). The UDP-N-acetyl-alpha-D-glucosamine site is built by Arg338 and Lys356. The Proton acceptor role is filled by His368. 2 residues coordinate UDP-N-acetyl-alpha-D-glucosamine: Tyr371 and Asn382. Residues 391 to 392 and Ala428 each bind acetyl-CoA; that span reads NY.

It in the N-terminal section; belongs to the N-acetylglucosamine-1-phosphate uridyltransferase family. The protein in the C-terminal section; belongs to the transferase hexapeptide repeat family. Homotrimer. It depends on Mg(2+) as a cofactor.

It is found in the cytoplasm. The catalysed reaction is alpha-D-glucosamine 1-phosphate + acetyl-CoA = N-acetyl-alpha-D-glucosamine 1-phosphate + CoA + H(+). It catalyses the reaction N-acetyl-alpha-D-glucosamine 1-phosphate + UTP + H(+) = UDP-N-acetyl-alpha-D-glucosamine + diphosphate. Its pathway is nucleotide-sugar biosynthesis; UDP-N-acetyl-alpha-D-glucosamine biosynthesis; N-acetyl-alpha-D-glucosamine 1-phosphate from alpha-D-glucosamine 6-phosphate (route II): step 2/2. It participates in nucleotide-sugar biosynthesis; UDP-N-acetyl-alpha-D-glucosamine biosynthesis; UDP-N-acetyl-alpha-D-glucosamine from N-acetyl-alpha-D-glucosamine 1-phosphate: step 1/1. It functions in the pathway bacterial outer membrane biogenesis; LPS lipid A biosynthesis. Catalyzes the last two sequential reactions in the de novo biosynthetic pathway for UDP-N-acetylglucosamine (UDP-GlcNAc). The C-terminal domain catalyzes the transfer of acetyl group from acetyl coenzyme A to glucosamine-1-phosphate (GlcN-1-P) to produce N-acetylglucosamine-1-phosphate (GlcNAc-1-P), which is converted into UDP-GlcNAc by the transfer of uridine 5-monophosphate (from uridine 5-triphosphate), a reaction catalyzed by the N-terminal domain. This chain is Bifunctional protein GlmU, found in Bifidobacterium longum (strain NCC 2705).